We begin with the raw amino-acid sequence, 268 residues long: 3-methyl-2-oxobutanoate hydroxymethyltransferase (268 aa).

The Mg(2+) site is built by Asp-41 and Asp-80. 3-methyl-2-oxobutanoate is bound by residues 41 to 42, Asp-80, and Lys-110; that span reads DS. Glu-112 lines the Mg(2+) pocket. The Proton acceptor role is filled by Glu-178.

It belongs to the PanB family. As to quaternary structure, homodecamer; pentamer of dimers. It depends on Mg(2+) as a cofactor.

The protein localises to the cytoplasm. It carries out the reaction 3-methyl-2-oxobutanoate + (6R)-5,10-methylene-5,6,7,8-tetrahydrofolate + H2O = 2-dehydropantoate + (6S)-5,6,7,8-tetrahydrofolate. The protein operates within cofactor biosynthesis; coenzyme A biosynthesis. Catalyzes the reversible reaction in which hydroxymethyl group from 5,10-methylenetetrahydrofolate is transferred onto alpha-ketoisovalerate to form ketopantoate. In Natronomonas pharaonis (strain ATCC 35678 / DSM 2160 / CIP 103997 / JCM 8858 / NBRC 14720 / NCIMB 2260 / Gabara) (Halobacterium pharaonis), this protein is 3-methyl-2-oxobutanoate hydroxymethyltransferase.